The following is a 328-amino-acid chain: MRQPHIAALLLLPLLLRSGTEGARTLRACGHPKMFNRMVGGENALEGEWPWQVSIQRNGIHFCGGSLIAPTWVLTAAHCFSNTSDISIYQVLLGALKLQQPGPHALYVPVKQVKSNPQYQGMASSADVALVELQGPVTFTNYILPVCLPDPSVIFESGMNCWVTGWGSPSEQDRLPNPRVLQKLAVPIIDTPKCNLLYNKDVESDFQLKTIKDDMLCAGFAEGKKDACKGDSGGPLVCLVDQSWVQAGVISWGEGCARRNRPGVYIRVTSHHKWIHQIIPELQFQGRAGTQQQQKDSQGQQRLAGNSAPCLAAHAMVLALGALLLRIV.

Residues 1–22 (MRQPHIAALLLLPLLLRSGTEG) form the signal peptide. Residues 23–37 (ARTLRACGHPKMFNR) constitute a propeptide, activation peptide. The Peptidase S1 domain occupies 38 to 280 (MVGGENALEG…HHKWIHQIIP (243 aa)). An intrachain disulfide couples Cys-63 to Cys-79. Residue His-78 is the Charge relay system of the active site. The N-linked (GlcNAc...) asparagine glycan is linked to Asn-82. Catalysis depends on Asp-127, which acts as the Charge relay system. 3 cysteine pairs are disulfide-bonded: Cys-161-Cys-238, Cys-194-Cys-217, and Cys-228-Cys-256. The Charge relay system role is filled by Ser-232.

It belongs to the peptidase S1 family.

The protein localises to the secreted. This is Serine protease 27 (Prss27) from Mus musculus (Mouse).